The primary structure comprises 290 residues: Protease HtpX (290 aa).

The next 2 helical transmembrane spans lie at 6–26 (LFLV…NILF) and 36–56 (ISGL…ISLL). A Zn(2+)-binding site is contributed by histidine 143. The active site involves glutamate 144. Zn(2+) is bound at residue histidine 147. Transmembrane regions (helical) follow at residues 158–178 (LIQG…AGVI) and 200–220 (ITVF…VMWF). Position 225 (glutamate 225) interacts with Zn(2+).

Belongs to the peptidase M48B family. The cofactor is Zn(2+).

Its subcellular location is the cell inner membrane. This is Protease HtpX from Aeromonas hydrophila subsp. hydrophila (strain ATCC 7966 / DSM 30187 / BCRC 13018 / CCUG 14551 / JCM 1027 / KCTC 2358 / NCIMB 9240 / NCTC 8049).